The following is a 325-amino-acid chain: Lipid droplet-associated hydrolase (325 aa).

S139 acts as the Nucleophile in catalysis. Residues D271 and H300 each act as charge relay system in the active site.

The protein belongs to the AB hydrolase superfamily. LDAH family. Present in macrophage-rich areas in atherosclerotic lesions (at protein level). Expressed in monocytes and monocyte-derived macrophages (at protein level).

The protein localises to the lipid droplet. It localises to the endoplasmic reticulum. The catalysed reaction is a cholesterol ester + H2O = cholesterol + a fatty acid + H(+). Probable serine lipid hydrolase associated with lipid droplets. Has low cholesterol esterase activity. Appears to lack triglyceride lipase activity. Involved in cholesterol and triglyceride homeostasis; has opposing effects, stimulating cellular triglyceride accumulation and cellular cholesterol release. Acts antagonistically with PNPLA2/ATGL in regulation of cellular lipid stores. May regulate triglyceride accumulation indirectly through stimulation of PNPLA2/ATGL ubiquitination and proteasomal degradation. Promotes microtubule-dependent lipid droplet fusion. Highly expressed in macrophage-rich areas in atherosclerotic lesions, suggesting that it could promote cholesterol ester turnover in macrophages. The protein is Lipid droplet-associated hydrolase of Homo sapiens (Human).